A 131-amino-acid polypeptide reads, in one-letter code: D-ribose pyranase (131 aa).

The active-site Proton donor is H20. Residues D28, H98, and 120–122 (YAN) contribute to the substrate site.

This sequence belongs to the RbsD / FucU family. RbsD subfamily. As to quaternary structure, homodecamer.

It localises to the cytoplasm. It catalyses the reaction beta-D-ribopyranose = beta-D-ribofuranose. It functions in the pathway carbohydrate metabolism; D-ribose degradation; D-ribose 5-phosphate from beta-D-ribopyranose: step 1/2. In terms of biological role, catalyzes the interconversion of beta-pyran and beta-furan forms of D-ribose. This is D-ribose pyranase from Bacillus cytotoxicus (strain DSM 22905 / CIP 110041 / 391-98 / NVH 391-98).